A 92-amino-acid polypeptide reads, in one-letter code: Long neurotoxin 1 (92 aa).

The first 21 residues, 1-21 (MKILLLTLVVVTIVCLDLAYT), serve as a signal peptide directing secretion. 5 cysteine pairs are disulfide-bonded: Cys-24-Cys-41, Cys-34-Cys-62, Cys-47-Cys-51, Cys-66-Cys-77, and Cys-78-Cys-83.

Belongs to the three-finger toxin family. Long-chain subfamily. Type II alpha-neurotoxin sub-subfamily. In terms of tissue distribution, expressed by the venom gland.

It is found in the secreted. Its function is as follows. Binds with high affinity to muscular (alpha-1/CHRNA1) and neuronal (alpha-7/CHRNA7) nicotinic acetylcholine receptor (nAChR) and inhibits acetylcholine from binding to the receptor, thereby impairing neuromuscular and neuronal transmission. This is Long neurotoxin 1 from Hydrophis hardwickii (Hardwick's spine-bellied seasnake).